The chain runs to 75 residues: ATP synthase subunit c (75 aa).

A run of 2 helical transmembrane segments spans residues 12–32 (LASI…GIVV) and 49–69 (LTVL…IGIG).

The protein belongs to the ATPase C chain family. F-type ATPases have 2 components, F(1) - the catalytic core - and F(0) - the membrane proton channel. F(1) has five subunits: alpha(3), beta(3), gamma(1), delta(1), epsilon(1). F(0) has three main subunits: a(1), b(2) and c(10-14). The alpha and beta chains form an alternating ring which encloses part of the gamma chain. F(1) is attached to F(0) by a central stalk formed by the gamma and epsilon chains, while a peripheral stalk is formed by the delta and b chains.

The protein localises to the cell membrane. Its function is as follows. F(1)F(0) ATP synthase produces ATP from ADP in the presence of a proton or sodium gradient. F-type ATPases consist of two structural domains, F(1) containing the extramembraneous catalytic core and F(0) containing the membrane proton channel, linked together by a central stalk and a peripheral stalk. During catalysis, ATP synthesis in the catalytic domain of F(1) is coupled via a rotary mechanism of the central stalk subunits to proton translocation. In terms of biological role, key component of the F(0) channel; it plays a direct role in translocation across the membrane. A homomeric c-ring of between 10-14 subunits forms the central stalk rotor element with the F(1) delta and epsilon subunits. This is ATP synthase subunit c from Tropheryma whipplei (strain TW08/27) (Whipple's bacillus).